Reading from the N-terminus, the 429-residue chain is Glutamate-1-semialdehyde 2,1-aminomutase 2 (429 aa).

Lys267 carries the N6-(pyridoxal phosphate)lysine modification.

Belongs to the class-III pyridoxal-phosphate-dependent aminotransferase family. HemL subfamily. Homodimer. Requires pyridoxal 5'-phosphate as cofactor.

It localises to the cytoplasm. The enzyme catalyses (S)-4-amino-5-oxopentanoate = 5-aminolevulinate. The protein operates within porphyrin-containing compound metabolism; protoporphyrin-IX biosynthesis; 5-aminolevulinate from L-glutamyl-tRNA(Glu): step 2/2. This is Glutamate-1-semialdehyde 2,1-aminomutase 2 from Brevibacillus brevis (strain 47 / JCM 6285 / NBRC 100599).